The sequence spans 145 residues: Transcription antitermination protein NusB (145 aa).

Belongs to the NusB family.

Its function is as follows. Involved in transcription antitermination. Required for transcription of ribosomal RNA (rRNA) genes. Binds specifically to the boxA antiterminator sequence of the ribosomal RNA (rrn) operons. The chain is Transcription antitermination protein NusB from Burkholderia cenocepacia (strain HI2424).